A 346-amino-acid chain; its full sequence is Uroporphyrinogen decarboxylase (346 aa).

Substrate contacts are provided by residues 21 to 25 (RQAGR), D71, Y146, S201, and H316.

It belongs to the uroporphyrinogen decarboxylase family. As to quaternary structure, homodimer.

It localises to the cytoplasm. It carries out the reaction uroporphyrinogen III + 4 H(+) = coproporphyrinogen III + 4 CO2. It functions in the pathway porphyrin-containing compound metabolism; protoporphyrin-IX biosynthesis; coproporphyrinogen-III from 5-aminolevulinate: step 4/4. Functionally, catalyzes the decarboxylation of four acetate groups of uroporphyrinogen-III to yield coproporphyrinogen-III. This is Uroporphyrinogen decarboxylase from Rickettsia massiliae (strain Mtu5).